A 311-amino-acid polypeptide reads, in one-letter code: Deoxyhypusine hydroxylase (311 aa).

5 HEAT-like PBS-type repeats span residues 69–95 (LKHE…VLEN), 102–128 (VRHE…YFKN), 196–222 (ERYR…GLDD), 228–254 (FKHE…TLKD), and 261–287 (VRHE…FLND). 4 residues coordinate Fe cation: H71, E72, H104, and E105. 4 residues coordinate Fe cation: H230, E231, H263, and E264.

This sequence belongs to the deoxyhypusine hydroxylase family. Fe(2+) is required as a cofactor.

It is found in the cytoplasm. It localises to the nucleus. It carries out the reaction [eIF5A protein]-deoxyhypusine + AH2 + O2 = [eIF5A protein]-hypusine + A + H2O. It participates in protein modification; eIF5A hypusination. In terms of biological role, catalyzes the hydroxylation of the N(6)-(4-aminobutyl)-L-lysine intermediate to form hypusine, an essential post-translational modification only found in mature eIF-5A factor. This is Deoxyhypusine hydroxylase from Debaryomyces hansenii (strain ATCC 36239 / CBS 767 / BCRC 21394 / JCM 1990 / NBRC 0083 / IGC 2968) (Yeast).